The sequence spans 422 residues: Hexuronate transporter (422 aa).

A run of 11 helical transmembrane segments spans residues 9 to 29 (VILF…ALSI), 45 to 65 (MGLI…LGGV), 82 to 102 (VWSL…LLII), 141 to 161 (TPLG…AFSW), 163 to 183 (VSFV…FKFV), 219 to 239 (LFTA…LTWF), 256 to 276 (VITV…GFVS), 294 to 314 (VVLV…GLVA), 321 to 341 (TLVA…WAVI), 356 to 376 (FMHF…GFIV), and 381 to 401 (TFSG…LAVI).

This sequence belongs to the major facilitator superfamily. Phthalate permease family.

It is found in the cell membrane. The catalysed reaction is aldehydo-D-glucuronate(in) + H(+)(in) = aldehydo-D-glucuronate(out) + H(+)(out). It catalyses the reaction aldehydo-D-galacturonate(out) + H(+)(out) = aldehydo-D-galacturonate(in) + H(+)(in). Functionally, transport of aldohexuronates such as D-glucuronate and D-galacturonate. The chain is Hexuronate transporter from Bacillus subtilis (strain 168).